The following is a 465-amino-acid chain: MKVYNTLTNKKEEFLPLVPGEVKMYVCGPTVYNFFHIGNARTFVVFDTIRRYLEYRGYKVKFIQNFTDIDDKMIKKANEEGTTVKELGDRFIKEYYKDADDLNIERATKNPRATEFMKEIIKFVSDLIEKGYAYEIDGDVYFSTKKFNSYGKLSGQNLEELQLGARINVDERKKDPMDFAIWKSQKPEEPAWESPWGMGRPGWHIECSCMAYNLLGETIDIHAGGSDLSFPHHENEIAQSEARTGKQFAKYWLHSAFVNVNNQKMSKSLNNFFTAREILEKYDADVLRMFMLSGHYRTQINFSMELLDSTKAALDRLYNSINNLENLLDEVKNEGLRDEELKYRDELQKYKEKYIEKMDDDFNTADAISVIFDLIRDVNTNITIESSKELVKYALDLIRELGSPLGILQKSTKASLEEEIERLIQERQKARKEKDWALADKIRDDLKERGIVLEDTPQGVRWKQI.

Zn(2+) is bound at residue Cys-27. A 'HIGH' region motif is present at residues 29 to 39 (PTVYNFFHIGN). Zn(2+) is bound by residues Cys-207, His-232, and Glu-236. The short motif at 264–268 (KMSKS) is the 'KMSKS' region element. Position 267 (Lys-267) interacts with ATP.

This sequence belongs to the class-I aminoacyl-tRNA synthetase family. In terms of assembly, monomer. It depends on Zn(2+) as a cofactor.

It localises to the cytoplasm. It carries out the reaction tRNA(Cys) + L-cysteine + ATP = L-cysteinyl-tRNA(Cys) + AMP + diphosphate. The polypeptide is Cysteine--tRNA ligase (Clostridium botulinum (strain 657 / Type Ba4)).